The following is a 580-amino-acid chain: TRAF-type zinc finger domain-containing protein 1 (580 aa).

At alanine 2 the chain carries N-acetylalanine. A TRAF-type zinc finger spans residues 27–103 (IHEIHCQRNI…DLELSVLKLK (77 aa)). Serine 190 carries the post-translational modification Phosphoserine. Over residues 197 to 209 (TTNQRSMTAQFPI) the composition is skewed to polar residues. The interval 197–236 (TTNQRSMTAQFPIQNNLLEEQERQERNRSRQTPKERGEDS) is disordered. Over residues 216 to 235 (EQERQERNRSRQTPKERGED) the composition is skewed to basic and acidic residues. Serine 326, serine 414, and serine 429 each carry phosphoserine. The interval 392-580 (PATANNHVSE…GAGDAEEEEE (189 aa)) is disordered. Basic and acidic residues predominate over residues 409–419 (QPRETSPELPK). Over residues 453-463 (PPNNTTAPPNR) the composition is skewed to low complexity. Serine 469 carries the phosphoserine modification.

As to quaternary structure, interacts with MAVS, TICAM1, TRAF1, TRAF2, TRAF3 and TRAF6.

Negative feedback regulator that controls excessive innate immune responses. Regulates both Toll-like receptor 4 (TLR4) and DDX58/RIG1-like helicases (RLH) pathways. May inhibit the LTR pathway by direct interaction with TRAF6 and attenuation of NF-kappa-B activation. May negatively regulate the RLH pathway downstream from MAVS and upstream of NF-kappa-B and IRF3. The sequence is that of TRAF-type zinc finger domain-containing protein 1 (TRAFD1) from Bos taurus (Bovine).